Here is an 85-residue protein sequence, read N- to C-terminus: Large ribosomal subunit protein bL27 (85 aa).

Positions 1 to 21 (MAHKKAGGSTRNGRDSEGKRL) are disordered.

It belongs to the bacterial ribosomal protein bL27 family.

The sequence is that of Large ribosomal subunit protein bL27 from Hamiltonella defensa subsp. Acyrthosiphon pisum (strain 5AT).